Consider the following 428-residue polypeptide: Tyrosine--tRNA ligase (428 aa).

L-tyrosine is bound at residue Y41. The short motif at 46-55 (PTADSLHLGH) is the 'HIGH' region element. L-tyrosine-binding residues include Y179 and Q183. A 'KMSKS' region motif is present at residues 239–243 (KFGKT). An ATP-binding site is contributed by K242. Residues 361–418 (ADLMQALVDSELQPSRGQARKTIASNAVTINGEKQSDPEYFFQDSDILFGRYTLLRRG) enclose the S4 RNA-binding domain.

The protein belongs to the class-I aminoacyl-tRNA synthetase family. TyrS type 1 subfamily. In terms of assembly, homodimer.

The protein resides in the cytoplasm. It carries out the reaction tRNA(Tyr) + L-tyrosine + ATP = L-tyrosyl-tRNA(Tyr) + AMP + diphosphate + H(+). In terms of biological role, catalyzes the attachment of tyrosine to tRNA(Tyr) in a two-step reaction: tyrosine is first activated by ATP to form Tyr-AMP and then transferred to the acceptor end of tRNA(Tyr). The polypeptide is Tyrosine--tRNA ligase (Citrobacter koseri (strain ATCC BAA-895 / CDC 4225-83 / SGSC4696)).